Consider the following 194-residue polypeptide: Lymphocyte antigen 6 complex locus protein G5b (194 aa).

A signal peptide spans 1–18 (MRACVLVHVLTMVGFALG). Positions 26-118 (RTCHLCFLED…SAQHQSTLPG (93 aa)) constitute a UPAR/Ly6 domain. Intrachain disulfides connect Cys-28–Cys-55, Cys-31–Cys-40, Cys-47–Cys-73, Cys-81–Cys-98, and Cys-99–Cys-104. An N-linked (GlcNAc...) asparagine glycan is attached at Asn-182.

N-glycosylated.

The protein localises to the secreted. The polypeptide is Lymphocyte antigen 6 complex locus protein G5b (Ly6g5b) (Rattus norvegicus (Rat)).